A 547-amino-acid polypeptide reads, in one-letter code: MFS-type transporter M6 (547 aa).

Residues 1 to 45 (MHRRRRDNLMTPAEMVASMKPPQSLSTEDDDGSRRDSESSADVLK) are disordered. The helical transmembrane segment at 81–101 (VLVVASFAAAISPFSTSTYYP) threads the bilayer. A glycan (N-linked (GlcNAc...) asparagine) is linked at asparagine 118. The helical transmembrane segment at 146–166 (PMFLVCFAIYFVANVGLALQN) threads the bilayer. Asparagine 167 is a glycosylation site (N-linked (GlcNAc...) asparagine). A run of 2 helical transmembrane segments spans residues 206–226 (LIYA…IGGL) and 236–256 (VFWF…IFFG). The N-linked (GlcNAc...) asparagine glycan is linked to asparagine 274. 5 helical membrane passes run 317–337 (FILS…TSVL), 347–367 (YDAV…LLAY), 407–427 (LGFV…YGWQ), 432–452 (APLA…TGVM), and 469–489 (AVGA…VAVV). The N-linked (GlcNAc...) asparagine glycan is linked to asparagine 493. A helical membrane pass occupies residues 496-516 (AGIGWTATVTAGLWVLMMPTL).

Belongs to the major facilitator superfamily. CAR1 family.

The protein resides in the membrane. Functionally, MFS-type transporter; part of the gene cluster that mediates the biosynthesis of squalestatin S1 (SQS1, also known as zaragozic acid A), a heavily oxidized fungal polyketide that offers potent cholesterol lowering activity by targeting squalene synthase (SS). The sequence is that of MFS-type transporter M6 from Phoma sp. (strain ATCC 20986 / MF5453).